Here is a 481-residue protein sequence, read N- to C-terminus: Glutamate--glyoxylate aminotransferase 2 (481 aa).

Lys-291 carries the N6-(pyridoxal phosphate)lysine modification. The short motif at 479 to 481 is the Peroxisomal targeting signal element; that stretch reads SRM.

It belongs to the class-I pyridoxal-phosphate-dependent aminotransferase family. Alanine aminotransferase subfamily. As to quaternary structure, homodimer. The cofactor is pyridoxal 5'-phosphate. The N-terminus is blocked. In terms of tissue distribution, expressed at low levels in seedlings, leaves, flowers, roots, and green siliques.

The protein localises to the peroxisome. The enzyme catalyses L-alanine + 2-oxoglutarate = pyruvate + L-glutamate. The catalysed reaction is glyoxylate + L-alanine = glycine + pyruvate. It carries out the reaction glycine + 2-oxoglutarate = glyoxylate + L-glutamate. Its pathway is photosynthesis; C4 acid pathway. The protein operates within amino-acid degradation; L-alanine degradation via transaminase pathway; pyruvate from L-alanine: step 1/1. Its function is as follows. Catalyzes the Glu:glyoxylate aminotransferase (GGT), Ala:glyoxylate aminotransferase (AGT), Ala:2-oxoglutarate aminotransferase (AKT) and Glu:pyruvate aminotransferase (GPT) reactions in peroxisomes. The chain is Glutamate--glyoxylate aminotransferase 2 (GGAT2) from Arabidopsis thaliana (Mouse-ear cress).